The primary structure comprises 123 residues: RxLR effector protein Avh262 (123 aa).

An N-terminal signal peptide occupies residues 1–18; it reads MLPVAVVLVVFAVAVTSA. Residues 24–46 form a disordered region; the sequence is VNPLPRRRRLKGTEEKGHHTNVN. The short motif at 30–50 is the RxLR-dEER element; that stretch reads RRRLKGTEEKGHHTNVNDEER. Residues 34–46 are compositionally biased toward basic and acidic residues; sequence KGTEEKGHHTNVN. Positions 60 to 82 are biP-binding; it reads LISKLKVKINAKLLAGDSAKPAT.

This sequence belongs to the RxLR effector family. Interacts with host plant ER-luminal binding immunoglobulin proteins (BiPs) such as soybean BiP1, BiP2, BiP3 and BiP4.

It localises to the secreted. It is found in the host endoplasmic reticulum. Functionally, effector that suppresses plant defense responses during the early stages of pathogen infection. Suppresses cell death induced by effectors and PAMPs in plant hosts. Avh262 stabilizes endoplasmic reticulum (ER)-luminal binding immunoglobulin proteins (BiPs), which act as negative regulators of plant resistance to Phytophthora. By stabilizing BiPs, Avh262 suppresses ER stress-triggered cell death and facilitates Phytophthora infection. In Phytophthora sojae (Soybean stem and root rot agent), this protein is RxLR effector protein Avh262.